The primary structure comprises 319 residues: Nuclear hormone receptor family member nhr-174 (319 aa).

A DNA-binding region (nuclear receptor) is located at residues 7 to 81 (DPVCPVCEFP…AGMKRNLVRQ (75 aa)). 2 NR C4-type zinc fingers span residues 10–31 (CPVC…CGAC) and 47–63 (CEKK…CRAC). The NR LBD domain occupies 130–319 (EAEKDVSKIL…SMKKSRYLQF (190 aa)).

It belongs to the nuclear hormone receptor family.

Its subcellular location is the nucleus. Its function is as follows. Orphan nuclear receptor. This chain is Nuclear hormone receptor family member nhr-174 (nhr-174), found in Caenorhabditis elegans.